A 225-amino-acid chain; its full sequence is tRNA (guanine-N(1)-)-methyltransferase (225 aa).

S-adenosyl-L-methionine contacts are provided by residues glycine 112 and 132–137 (IGDYVL).

This sequence belongs to the RNA methyltransferase TrmD family. As to quaternary structure, homodimer.

The protein localises to the cytoplasm. It carries out the reaction guanosine(37) in tRNA + S-adenosyl-L-methionine = N(1)-methylguanosine(37) in tRNA + S-adenosyl-L-homocysteine + H(+). Its function is as follows. Specifically methylates guanosine-37 in various tRNAs. This chain is tRNA (guanine-N(1)-)-methyltransferase, found in Porphyromonas gingivalis (strain ATCC 33277 / DSM 20709 / CIP 103683 / JCM 12257 / NCTC 11834 / 2561).